The following is a 258-amino-acid chain: Small ribosomal subunit protein uS15m (258 aa).

The N-terminal 57 residues, 1-57, are a transit peptide targeting the mitochondrion; that stretch reads MLRAAWRALSSVRAQAVTRAPVPALRGGSSASLLSARCGLQPPSLLRAARAYAAVQK. The interval 229–258 is disordered; the sequence is KAAAAAAKKEKNEGVPENPSNAVPEKTQVN.

Belongs to the universal ribosomal protein uS15 family. In terms of assembly, component of the mitochondrial ribosome small subunit (28S) which comprises a 12S rRNA and about 30 distinct proteins. Interacts with METTL17.

It localises to the mitochondrion matrix. This chain is Small ribosomal subunit protein uS15m (Mrps15), found in Mus musculus (Mouse).